The chain runs to 250 residues: Probable transcriptional regulatory protein ckrop_1032 (250 aa).

The segment at 1-22 (MSGHSKWATTKHKKAANDAKRG) is disordered.

It belongs to the TACO1 family.

It localises to the cytoplasm. The protein is Probable transcriptional regulatory protein ckrop_1032 of Corynebacterium kroppenstedtii (strain DSM 44385 / JCM 11950 / CIP 105744 / CCUG 35717).